We begin with the raw amino-acid sequence, 657 residues long: N-acetylgalactosaminyltransferase 7 (657 aa).

Residues 1–6 (MRLKIG) are Cytoplasmic-facing. Residues 7 to 29 (FILRSLLVVGSFLGLVVLWSSLT) traverse the membrane as a helical; Signal-anchor for type II membrane protein segment. The Lumenal segment spans residues 30 to 657 (PRPDDPSPLS…KWEMNNIHSV (628 aa)). The tract at residues 31 to 66 (RPDDPSPLSRMREDRDVNDPMPNRGGNGLAPGEDRF) is disordered. Cystine bridges form between Cys-197–Cys-435, Cys-426–Cys-507, Cys-545–Cys-562, Cys-585–Cys-600, and Cys-625–Cys-640. Residues 206–317 (LLTSSVVIVF…VNWYAPLVAP (112 aa)) form a catalytic subdomain A region. Positions 247 and 277 each coordinate substrate. Mn(2+) contacts are provided by Asp-301 and His-303. A catalytic subdomain B region spans residues 381-443 (PYRSPAMAGG…PCSRVGHIYR (63 aa)). Substrate is bound at residue Trp-412. His-440 serves as a coordination point for Mn(2+). Residue Arg-443 coordinates substrate. A Ricin B-type lectin domain is found at 532-652 (VDWGEIRGFE…SKTTQKWEMN (121 aa)).

The protein belongs to the glycosyltransferase 2 family. GalNAc-T subfamily. Mn(2+) is required as a cofactor.

It localises to the golgi apparatus membrane. It catalyses the reaction L-seryl-[protein] + UDP-N-acetyl-alpha-D-galactosamine = a 3-O-[N-acetyl-alpha-D-galactosaminyl]-L-seryl-[protein] + UDP + H(+). The enzyme catalyses L-threonyl-[protein] + UDP-N-acetyl-alpha-D-galactosamine = a 3-O-[N-acetyl-alpha-D-galactosaminyl]-L-threonyl-[protein] + UDP + H(+). Its pathway is protein modification; protein glycosylation. Glycopeptide transferase involved in O-linked oligosaccharide biosynthesis, which catalyzes the transfer of an N-acetyl-D-galactosamine residue to an already glycosylated peptide. In contrast to other proteins of the family, it does not act as a peptide transferase that transfers GalNAc onto serine or threonine residue on the protein receptor, but instead requires the prior addition of a GalNAc on a peptide before adding additional GalNAc moieties. Some peptide transferase activity is however not excluded, considering that its appropriate peptide substrate may remain unidentified. The protein is N-acetylgalactosaminyltransferase 7 (GALNT7) of Pongo abelii (Sumatran orangutan).